The following is a 147-amino-acid chain: Hemoglobin subunit beta (147 aa).

A Globin domain is found at 3–147 (EWTDKERTII…VVSALGKQYH (145 aa)). 2 residues coordinate heme b: His-64 and His-93.

The protein belongs to the globin family. Heterotetramer of two alpha chains and two beta chains. Red blood cells.

Functionally, involved in oxygen transport from gills to the various peripheral tissues. The sequence is that of Hemoglobin subunit beta from Trematomus newnesi (Dusky notothen).